The following is a 316-amino-acid chain: ATP synthase gamma chain (316 aa).

The protein belongs to the ATPase gamma chain family. In terms of assembly, F-type ATPases have 2 components, CF(1) - the catalytic core - and CF(0) - the membrane proton channel. CF(1) has five subunits: alpha(3), beta(3), gamma(1), delta(1), epsilon(1). CF(0) has three main subunits: a, b and c.

Its subcellular location is the cellular thylakoid membrane. Produces ATP from ADP in the presence of a proton gradient across the membrane. The gamma chain is believed to be important in regulating ATPase activity and the flow of protons through the CF(0) complex. The chain is ATP synthase gamma chain from Synechococcus sp. (strain ATCC 27144 / PCC 6301 / SAUG 1402/1) (Anacystis nidulans).